Reading from the N-terminus, the 183-residue chain is Adenine phosphoribosyltransferase (183 aa).

It belongs to the purine/pyrimidine phosphoribosyltransferase family. As to quaternary structure, homodimer.

Its subcellular location is the cytoplasm. It catalyses the reaction AMP + diphosphate = 5-phospho-alpha-D-ribose 1-diphosphate + adenine. It participates in purine metabolism; AMP biosynthesis via salvage pathway; AMP from adenine: step 1/1. Functionally, catalyzes a salvage reaction resulting in the formation of AMP, that is energically less costly than de novo synthesis. The polypeptide is Adenine phosphoribosyltransferase (Edwardsiella ictaluri (strain 93-146)).